The primary structure comprises 61 residues: Large ribosomal subunit protein bL32 (61 aa).

Over residues 1–22 the composition is skewed to basic residues; it reads MAVPKKKTSRARRDRRRSHHAL. The tract at residues 1–24 is disordered; it reads MAVPKKKTSRARRDRRRSHHALRG.

The protein belongs to the bacterial ribosomal protein bL32 family.

The chain is Large ribosomal subunit protein bL32 from Rubrobacter xylanophilus (strain DSM 9941 / JCM 11954 / NBRC 16129 / PRD-1).